The following is a 107-amino-acid chain: uncharacterized protein (107 aa).

The protein localises to the mitochondrion. This is an uncharacterized protein from Arabidopsis thaliana (Mouse-ear cress).